The sequence spans 483 residues: Protein nucleotidyltransferase YdiU (483 aa).

ATP is bound by residues Gly87, Gly89, Arg90, Lys110, Asp122, Gly123, Arg173, and Arg180. The active-site Proton acceptor is the Asp249. Asn250 and Asp259 together coordinate Mg(2+). Residue Asp259 coordinates ATP.

This sequence belongs to the SELO family. The cofactor is Mg(2+). Requires Mn(2+) as cofactor.

It carries out the reaction L-seryl-[protein] + ATP = 3-O-(5'-adenylyl)-L-seryl-[protein] + diphosphate. The catalysed reaction is L-threonyl-[protein] + ATP = 3-O-(5'-adenylyl)-L-threonyl-[protein] + diphosphate. It catalyses the reaction L-tyrosyl-[protein] + ATP = O-(5'-adenylyl)-L-tyrosyl-[protein] + diphosphate. The enzyme catalyses L-histidyl-[protein] + UTP = N(tele)-(5'-uridylyl)-L-histidyl-[protein] + diphosphate. It carries out the reaction L-seryl-[protein] + UTP = O-(5'-uridylyl)-L-seryl-[protein] + diphosphate. The catalysed reaction is L-tyrosyl-[protein] + UTP = O-(5'-uridylyl)-L-tyrosyl-[protein] + diphosphate. Functionally, nucleotidyltransferase involved in the post-translational modification of proteins. It can catalyze the addition of adenosine monophosphate (AMP) or uridine monophosphate (UMP) to a protein, resulting in modifications known as AMPylation and UMPylation. The protein is Protein nucleotidyltransferase YdiU of Yersinia pseudotuberculosis serotype O:1b (strain IP 31758).